Reading from the N-terminus, the 323-residue chain is tRNA(Ile)-lysidine synthase (323 aa).

An ATP-binding site is contributed by 33-38; the sequence is SGGPDS.

Belongs to the tRNA(Ile)-lysidine synthase family.

The protein localises to the cytoplasm. The enzyme catalyses cytidine(34) in tRNA(Ile2) + L-lysine + ATP = lysidine(34) in tRNA(Ile2) + AMP + diphosphate + H(+). Ligates lysine onto the cytidine present at position 34 of the AUA codon-specific tRNA(Ile) that contains the anticodon CAU, in an ATP-dependent manner. Cytidine is converted to lysidine, thus changing the amino acid specificity of the tRNA from methionine to isoleucine. This is tRNA(Ile)-lysidine synthase from Mycobacterium bovis (strain ATCC BAA-935 / AF2122/97).